An 83-amino-acid polypeptide reads, in one-letter code: Hepcidin-2 (83 aa).

The signal sequence occupies residues 1–26; the sequence is MALSTRTQAACLLLLLLASLSSTTYL. Positions 27-53 are excised as a propeptide; sequence QQQMRQTTELQPLHGEESRADIAIPMQ. 4 disulfide bridges follow: C65–C81, C68–C71, C69–C77, and C72–C80.

It belongs to the hepcidin family. In terms of tissue distribution, highly expressed in the liver and to a much lesser extent in the heart. Also expressed in pancreas.

Its subcellular location is the secreted. Functionally, seems to act as a signaling molecule involved in the maintenance of iron homeostasis. The sequence is that of Hepcidin-2 (Hamp2) from Mus musculus (Mouse).